Reading from the N-terminus, the 404-residue chain is Nicotinate phosphoribosyltransferase (404 aa).

Residue histidine 225 is modified to Phosphohistidine; by autocatalysis.

The protein belongs to the NAPRTase family. Post-translationally, transiently phosphorylated on a His residue during the reaction cycle. Phosphorylation strongly increases the affinity for substrates and increases the rate of nicotinate D-ribonucleotide production. Dephosphorylation regenerates the low-affinity form of the enzyme, leading to product release.

The catalysed reaction is nicotinate + 5-phospho-alpha-D-ribose 1-diphosphate + ATP + H2O = nicotinate beta-D-ribonucleotide + ADP + phosphate + diphosphate. The protein operates within cofactor biosynthesis; NAD(+) biosynthesis; nicotinate D-ribonucleotide from nicotinate: step 1/1. In terms of biological role, catalyzes the synthesis of beta-nicotinate D-ribonucleotide from nicotinate and 5-phospho-D-ribose 1-phosphate at the expense of ATP. This is Nicotinate phosphoribosyltransferase from Acinetobacter baumannii (strain ATCC 17978 / DSM 105126 / CIP 53.77 / LMG 1025 / NCDC KC755 / 5377).